The chain runs to 434 residues: Putative magnesium transporter MRS2-D (434 aa).

2 disordered regions span residues 126–171 (AASP…DGEA) and 279–311 (EASE…AGGG). Basic and acidic residues predominate over residues 279–291 (EASELEDHSSRDE). Transmembrane regions (helical) follow at residues 367 to 387 (GILL…TGVF) and 405 to 425 (FPCA…AALL).

The protein belongs to the CorA metal ion transporter (MIT) (TC 1.A.35.5) family.

It is found in the membrane. Functionally, putative magnesium transporter. This Oryza sativa subsp. japonica (Rice) protein is Putative magnesium transporter MRS2-D (MRS2-D).